A 644-amino-acid chain; its full sequence is Exoribonuclease 2 (644 aa).

In terms of domain architecture, RNB spans 189–516; that stretch reads RQDLTALNFV…NHRLLKAVIK (328 aa). The S1 motif domain occupies 561 to 643; that stretch reads DTRFAAEIID…DTRSIIARPA (83 aa).

This sequence belongs to the RNR ribonuclease family. RNase II subfamily.

It is found in the cytoplasm. The catalysed reaction is Exonucleolytic cleavage in the 3'- to 5'-direction to yield nucleoside 5'-phosphates.. Functionally, involved in mRNA degradation. Hydrolyzes single-stranded polyribonucleotides processively in the 3' to 5' direction. This chain is Exoribonuclease 2, found in Salmonella arizonae (strain ATCC BAA-731 / CDC346-86 / RSK2980).